We begin with the raw amino-acid sequence, 410 residues long: ORC1-type DNA replication protein 4 (410 aa).

Residues 73-77 (TGKSL), Y220, and R232 each bind ATP.

This sequence belongs to the CDC6/cdc18 family.

Its function is as follows. Involved in regulation of DNA replication. The protein is ORC1-type DNA replication protein 4 (orc4) of Halobacterium salinarum (strain ATCC 700922 / JCM 11081 / NRC-1) (Halobacterium halobium).